The chain runs to 295 residues: Small ribosomal subunit protein uS2 (295 aa).

Positions 260 to 295 (KQAKKFSKTKNIDEETNTEFEQALNDADENKNSDNA) are disordered.

This sequence belongs to the universal ribosomal protein uS2 family.

The sequence is that of Small ribosomal subunit protein uS2 from Rickettsia felis (strain ATCC VR-1525 / URRWXCal2) (Rickettsia azadi).